We begin with the raw amino-acid sequence, 634 residues long: Zinc finger and BTB domain-containing protein 22 (634 aa).

Positions 57–121 (CDVSIRVQGR…AYTGRLSMAA (65 aa)) constitute a BTB domain. Disordered stretches follow at residues 167–247 (TVPG…APVV) and 308–461 (APTP…GTSV). The segment covering 180-198 (TVAPATMGSARSHASSRAS) has biased composition (low complexity). Residues 199 to 209 (ENQSPSSSNYF) show a composition bias toward polar residues. Position 202 is a phosphoserine (Ser202). Positions 217-229 (FSSSSQEAFAASA) are enriched in low complexity. The segment covering 317–340 (PDLEEEEEEEDLVLTCEDDEDEEL) has biased composition (acidic residues). Residues 452–461 (GAVTVGGTSV) show a composition bias toward low complexity. The C2H2-type 1; atypical zinc finger occupies 486 to 507 (FLCHCGKAFSHKSMRDRHVNMH). C2H2-type zinc fingers lie at residues 513–535 (FDCP…MKTH) and 541–562 (YECG…HRGH). The disordered stretch occupies residues 568 to 634 (RLGGVGAVPG…MGFGGGGGAN (67 aa)). Residues 608-618 (PPSSRRVWSPP) are compositionally biased toward low complexity.

The protein belongs to the krueppel C2H2-type zinc-finger protein family.

It is found in the nucleus. In terms of biological role, may be involved in transcriptional regulation. The sequence is that of Zinc finger and BTB domain-containing protein 22 (ZBTB22) from Homo sapiens (Human).